A 65-amino-acid polypeptide reads, in one-letter code: DNA gyrase inhibitor YacG (65 aa).

Residues cysteine 9, cysteine 12, cysteine 28, and cysteine 32 each contribute to the Zn(2+) site. The segment at 43–65 (EEKRIPSQSENSDSDDWSGQPEQ) is disordered.

Belongs to the DNA gyrase inhibitor YacG family. Interacts with GyrB. The cofactor is Zn(2+).

Functionally, inhibits all the catalytic activities of DNA gyrase by preventing its interaction with DNA. Acts by binding directly to the C-terminal domain of GyrB, which probably disrupts DNA binding by the gyrase. This Photorhabdus laumondii subsp. laumondii (strain DSM 15139 / CIP 105565 / TT01) (Photorhabdus luminescens subsp. laumondii) protein is DNA gyrase inhibitor YacG.